A 737-amino-acid chain; its full sequence is Photosystem I P700 chlorophyll a apoprotein A2 (737 aa).

Transmembrane regions (helical) follow at residues 46 to 69 (IFAS…FHVA), 135 to 158 (LYNG…LHLQ), 175 to 199 (LNHH…HVAI), 273 to 291 (IAHH…GHMY), 330 to 353 (LHFQ…QHMY), 369 to 395 (AALY…IFLV), 417 to 439 (AIIS…LYVH), and 520 to 538 (FLVH…LILV). The [4Fe-4S] cluster site is built by Cys562 and Cys571. Helical transmembrane passes span 578-599 (AFYL…YWHW) and 646-668 (LSVW…MFLI). Residues His657, Met665, and Tyr673 each contribute to the chlorophyll a site. Trp674 serves as a coordination point for phylloquinone. A helical membrane pass occupies residues 710–730 (LVGLAHFAVGYIVTYAAFLIA).

This sequence belongs to the PsaA/PsaB family. As to quaternary structure, the PsaA/B heterodimer binds the P700 chlorophyll special pair and subsequent electron acceptors. PSI consists of a core antenna complex that captures photons, and an electron transfer chain that converts photonic excitation into a charge separation. The eukaryotic PSI reaction center is composed of at least 11 subunits. It depends on P700 is a chlorophyll a/chlorophyll a' dimer, A0 is one or more chlorophyll a, A1 is one or both phylloquinones and FX is a shared 4Fe-4S iron-sulfur center. as a cofactor.

Its subcellular location is the plastid. The protein localises to the cyanelle thylakoid membrane. It carries out the reaction reduced [plastocyanin] + hnu + oxidized [2Fe-2S]-[ferredoxin] = oxidized [plastocyanin] + reduced [2Fe-2S]-[ferredoxin]. PsaA and PsaB bind P700, the primary electron donor of photosystem I (PSI), as well as the electron acceptors A0, A1 and FX. PSI is a cytochrome c6-ferredoxin oxidoreductase, converting photonic excitation into a charge separation, which transfers an electron from the donor P700 chlorophyll pair to the spectroscopically characterized acceptors A0, A1, FX, FA and FB in turn. Oxidized P700 is reduced on the lumenal side of the thylakoid membrane by cytochrome c6. The chain is Photosystem I P700 chlorophyll a apoprotein A2 from Cyanophora paradoxa.